Reading from the N-terminus, the 114-residue chain is DNA-directed RNA polymerases II, IV and V subunit 9B (114 aa).

Cysteine 7, cysteine 10, cysteine 29, cysteine 32, cysteine 76, cysteine 79, cysteine 103, and cysteine 108 together coordinate Zn(2+). Residues 72–113 form a TFIIS-type zinc finger; the sequence is KAVRCAKCQHGEAVFFQATARGEEGMTLFFVCCNPNCSHRWR.

The protein belongs to the archaeal RpoM/eukaryotic RPA12/RPB9/RPC11 RNA polymerase family. Component of the RNA polymerase II, IV and V complexes. Interacts with NRPD1.

It is found in the nucleus. Its subcellular location is the nucleolus. In terms of biological role, DNA-dependent RNA polymerase catalyzes the transcription of DNA into RNA using the four ribonucleoside triphosphates as substrates. Component of RNA polymerase II which synthesizes mRNA precursors and many functional non-coding RNAs. Pol II is the central component of the basal RNA polymerase II transcription machinery. It is composed of mobile elements that move relative to each other. Component of RNA polymerases IV and V which mediate short-interfering RNAs (siRNA) accumulation and subsequent RNA-directed DNA methylation-dependent (RdDM) transcriptional gene silencing (TGS) of endogenous repeated sequences, including transposable elements. Required for RNA silencing. The sequence is that of DNA-directed RNA polymerases II, IV and V subunit 9B (NRPB9B) from Arabidopsis thaliana (Mouse-ear cress).